A 296-amino-acid chain; its full sequence is NAD kinase (296 aa).

Residue Asp72 is the Proton acceptor of the active site. NAD(+) contacts are provided by residues 72 to 73 (DG), 146 to 147 (ND), Arg157, Lys174, Asp176, 187 to 192 (TAYALS), and Gln247.

This sequence belongs to the NAD kinase family. It depends on a divalent metal cation as a cofactor.

The protein localises to the cytoplasm. The catalysed reaction is NAD(+) + ATP = ADP + NADP(+) + H(+). In terms of biological role, involved in the regulation of the intracellular balance of NAD and NADP, and is a key enzyme in the biosynthesis of NADP. Catalyzes specifically the phosphorylation on 2'-hydroxyl of the adenosine moiety of NAD to yield NADP. The sequence is that of NAD kinase from Pseudomonas savastanoi pv. phaseolicola (strain 1448A / Race 6) (Pseudomonas syringae pv. phaseolicola (strain 1448A / Race 6)).